The sequence spans 574 residues: Serine/arginine repetitive matrix protein 4 (574 aa).

Disordered stretches follow at residues 45–217, 257–291, 366–422, 454–508, and 526–574; these read LETP…HGGD, IVQN…ITRS, DLIS…SYSL, YCSS…VSSR, and RSRS…RARR. Residues 51-72 are compositionally biased toward basic and acidic residues; that stretch reads PKDDEEKVKAKDLVTKTHEKNG. Composition is skewed to basic residues over residues 73–88, 102–120, and 128–184; these read HIKR…RRAR, PKTK…RHRS, and VRKK…HRKA. The segment covering 194–217 has biased composition (basic and acidic residues); it reads NRSEDCEKSGFRDGGRSSDVHGGD. Positions 275-289 are enriched in polar residues; it reads GNDTSSPPSSKTGIT. Positions 366 to 385 are enriched in basic and acidic residues; that stretch reads DLISDRNRSPSHDRYEDGTR. Low complexity predominate over residues 405-422; sequence RSLSSGRRSYSRSSSYSL. The span at 454 to 477 shows a compositional bias: basic residues; sequence YCSSCKSRKHSRRRPSSPMRKRRR. Residues 478–487 show a composition bias toward basic and acidic residues; that stretch reads DSPSHLEARR. The span at 496–508 shows a compositional bias: low complexity; sequence IPYYRPSPSVSSR. The segment covering 526-539 has biased composition (basic residues); it reads RSRSCSRSRSRSHS. Residues 540-559 are compositionally biased toward low complexity; that stretch reads HTYSSYRSYSRSSSWNSLYS. The span at 560 to 574 shows a compositional bias: basic residues; that stretch reads RRSRSRSRSYSRARR.

It belongs to the nSR100 family.

The protein resides in the nucleus. In terms of biological role, splicing factor specifically required for neural cell differentiation. Acts in conjunction with nPTB/PTBP2 by binding directly to its regulated target transcripts and promotes neural-specific exon inclusion in many genes that function in neural cell differentiation. Required to promote the inclusion of neural-specific exon 10 in nPTB/PTBP2, leading to increased expression of neural-specific nPTB/PTBP2. This is Serine/arginine repetitive matrix protein 4 (srrm4) from Danio rerio (Zebrafish).